The chain runs to 100 residues: Large ribosomal subunit protein uL23 (100 aa).

The protein belongs to the universal ribosomal protein uL23 family. Part of the 50S ribosomal subunit. Contacts protein L29, and trigger factor when it is bound to the ribosome.

Its function is as follows. One of the early assembly proteins it binds 23S rRNA. One of the proteins that surrounds the polypeptide exit tunnel on the outside of the ribosome. Forms the main docking site for trigger factor binding to the ribosome. The chain is Large ribosomal subunit protein uL23 from Shewanella frigidimarina (strain NCIMB 400).